A 748-amino-acid chain; its full sequence is MLETNNHTNAWQGFKTGRWNKNIDVREFIQLNYSLYEGDDEFLEGPTKATETLWDQVMQLSKEERERGGMWDMDTKVASTITSHDAGYLDKDLEKVVGVQTEKPFKRSMQPFGGIRMAKAACEAYGYELDPETEKIFTEYRKTHNQGVFDAYSREMLNCRKAGIITGLPDAYGRGRIIGDYRRVALYGVDFLMEQKLKDFNTMSTEMSEDVIRLREELSEQYRSLQDLKELGQKYGFDISRPATNFKEAVQWLYLAYLAAIKEQNGAAMSLGRTSTFLDIYAERDLQNGDITEQEVQEIIDHFIMKLRIVKFARTPEYNELFSGDPTWVTESIGGVGIDGRPMVTKNSFRFLHSLDNLGPAPEPNLTVLWSTRLPENFKIYCAKMSIKTSSIQYENDDLMRESYGDDYGIACCVSAMKIGKQMQFFGARANLAKALLYAINGGKDEKSGKQVGPSYEGIKSDVLDYDEVFERYEKMMDWLAGVYINSLNIIHYMHDKYSYERLEMALHDTEIIRTMATGIAGLSVAADSLSAIKYAQVKPIRNEEGLVTDFEIEGDFPKYGNNDSRVDEIAVDLVERFMTKLRSHKTYRNSEHTMSVLTITSNVVYGKKTGNTPDGRKAGEPFAPGANPMHGRDQKGALSSLSSVAKIPYDCCKDGISNTFSIVPKSLGKEEVDQNKNLTSMLDGYAMQHGHHLNINVFNRETLIDAMEHPEEYPQLTIRVSGYAVNFIKLTREQQLDVISRTFHESM.

A PFL domain is found at 5–618 (NNHTNAWQGF…KTGNTPDGRK (614 aa)). Catalysis depends on Cys-412, which acts as the S-acetylcysteine intermediate. Cys-413 (cysteine radical intermediate) is an active-site residue. Residues 625 to 748 (PGANPMHGRD…VISRTFHESM (124 aa)) form the Glycine radical domain. Gly-723 bears the Glycine radical mark.

It belongs to the glycyl radical enzyme (GRE) family. PFL subfamily. As to quaternary structure, homodimer.

It localises to the cytoplasm. It carries out the reaction formate + acetyl-CoA = pyruvate + CoA. It functions in the pathway fermentation; pyruvate fermentation; formate from pyruvate: step 1/1. Its function is as follows. Catalyzes the conversion of pyruvate to formate and acetyl-CoA. The chain is Formate acetyltransferase (pflB) from Staphylococcus epidermidis (strain ATCC 35984 / DSM 28319 / BCRC 17069 / CCUG 31568 / BM 3577 / RP62A).